The sequence spans 293 residues: Homoserine kinase (293 aa).

84-94 (PLSRGLGSSSA) contributes to the ATP binding site.

Belongs to the GHMP kinase family. Homoserine kinase subfamily.

Its subcellular location is the cytoplasm. The enzyme catalyses L-homoserine + ATP = O-phospho-L-homoserine + ADP + H(+). It participates in amino-acid biosynthesis; L-threonine biosynthesis; L-threonine from L-aspartate: step 4/5. Catalyzes the ATP-dependent phosphorylation of L-homoserine to L-homoserine phosphate. The sequence is that of Homoserine kinase from Nitratiruptor sp. (strain SB155-2).